A 207-amino-acid chain; its full sequence is Probable GTP-binding protein EngB (207 aa).

In terms of domain architecture, EngB-type G spans 24–199 (GGYEVAFAGR…RGIVGGWLGL (176 aa)). Residues 32 to 39 (GRSNAGKS), 59 to 63 (GRTQQ), 77 to 80 (DLPG), 144 to 147 (TKAD), and 178 to 180 (YSG) each bind GTP. Residues Ser39 and Thr61 each contribute to the Mg(2+) site.

The protein belongs to the TRAFAC class TrmE-Era-EngA-EngB-Septin-like GTPase superfamily. EngB GTPase family. Mg(2+) is required as a cofactor.

Its function is as follows. Necessary for normal cell division and for the maintenance of normal septation. The sequence is that of Probable GTP-binding protein EngB from Xanthomonas campestris pv. campestris (strain 8004).